Here is a 25-residue protein sequence, read N- to C-terminus: NU-conotoxin-Ltg1a (25 aa).

Contains 2 disulfide bonds. However, cysteine pairing is not critical for peptide binding to melanocortin receptors, since peptides with different pairings have similar potency at the receptors tested. Expressed by the venom duct.

Its subcellular location is the secreted. Functionally, peptide with nanomolar affinity for human melanocortin receptors. The natural disulfide pairing being unknown, the activity of all three possible peptides (with the cysteine pairings 'bead (I-II, III-IV), 'globular' (I-III, II-IV), and 'ribbon' (I-IV, II-III)) have been tested. All three isomers show similar affinities on each human melanocortin subtype (MC1R (~500 nM), MC3R (~100 nM), MC4R (~50 nM), and MC5R (~50 nM)). The polypeptide is NU-conotoxin-Ltg1a (Conus litoglyphus (Lithograph cone)).